Consider the following 1078-residue polypeptide: Nonribosomal peptide synthetase aneB (1078 aa).

The adenylation stretch occupies residues 20–417; it reads FQQNVLDRPD…HGRKDTQVKI (398 aa). Residues 559–635 form the Carrier domain; sequence MPTTPLERQM…TLCQHVSVRP (77 aa). O-(pantetheine 4'-phosphoryl)serine is present on Ser596. A condensation region spans residues 699 to 1013; the sequence is NYTLRLDVKL…HEMGYYGPVT (315 aa).

It belongs to the NRP synthetase family.

It carries out the reaction holo-[peptidyl-carrier protein] + L-proline + ATP = L-prolyl-[peptidyl-carrier protein] + AMP + diphosphate. The protein operates within secondary metabolite biosynthesis. Its function is as follows. Nonribosomal peptide synthetase; part of the gene cluster that mediates the biosynthesis of aculenes, a unique type of norsesquiterpenes that contain a nordaucane skeleton linked to an L-proline moiety and are of mixed biosynthetic origin. The pathway begins with the synthesis of dauca-4,7-diene by the terpene cyclase aneC using farnesyl pyrophosphate (FPP) as substrate. The cytochrome P450 monooxygenase aneF then performs the initial oxidation at C-12 of dauca-4,7-diene to yield asperaculane D. Asperaculane D is substrate of the cytochrome P450 monooxygenase aneD for C-10 hydroxylation to yield asperaculane E. The cytochrome P450 monooxygenase aneG then converts asperaculane E into aculene D via C-2 oxidation. The monomodular nonribosomal peptide synthase aneB adenylates L-proline and the thiohydrolase aneE transfers this activated L-proline derivative to aculenes D and C to produce respectively aculenes B and A. The dioxygenase aneA converts aculene D into aculene C, and aculene B into aculene A by introducing the 5,6-alkene moiety. Asperculanes A, B, C and F, as well as 14-prolyl asperculane C, might be shunt products of the pathway. The chain is Nonribosomal peptide synthetase aneB from Aspergillus aculeatus (strain ATCC 16872 / CBS 172.66 / WB 5094).